Reading from the N-terminus, the 70-residue chain is Large ribosomal subunit protein bL31 (70 aa).

The Zn(2+) site is built by C16, C18, C38, and C41.

Belongs to the bacterial ribosomal protein bL31 family. Type A subfamily. As to quaternary structure, part of the 50S ribosomal subunit. It depends on Zn(2+) as a cofactor.

Its function is as follows. Binds the 23S rRNA. The sequence is that of Large ribosomal subunit protein bL31 from Vesicomyosocius okutanii subsp. Calyptogena okutanii (strain HA).